The primary structure comprises 378 residues: UPF0754 membrane protein BCAH820_0954 (378 aa).

A run of 2 helical transmembrane segments spans residues 1–21 (MNIW…GGFT) and 357–377 (YLGA…LLFL).

The protein belongs to the UPF0754 family.

It is found in the cell membrane. The sequence is that of UPF0754 membrane protein BCAH820_0954 from Bacillus cereus (strain AH820).